The primary structure comprises 400 residues: Formate-dependent phosphoribosylglycinamide formyltransferase (400 aa).

N(1)-(5-phospho-beta-D-ribosyl)glycinamide contacts are provided by residues 22–23 and E82; that span reads EL. Residues R115, K157, 162-167, 197-200, and E205 each bind ATP; these read SSGKGQ and EGFI. The ATP-grasp domain occupies 120-315; the sequence is RLAAETLGLP…EFELHARAIL (196 aa). Residues E274 and E286 each contribute to the Mg(2+) site. N(1)-(5-phospho-beta-D-ribosyl)glycinamide contacts are provided by residues D293, K362, and 369-370; that span reads RR.

This sequence belongs to the PurK/PurT family. Homodimer.

The catalysed reaction is N(1)-(5-phospho-beta-D-ribosyl)glycinamide + formate + ATP = N(2)-formyl-N(1)-(5-phospho-beta-D-ribosyl)glycinamide + ADP + phosphate + H(+). It functions in the pathway purine metabolism; IMP biosynthesis via de novo pathway; N(2)-formyl-N(1)-(5-phospho-D-ribosyl)glycinamide from N(1)-(5-phospho-D-ribosyl)glycinamide (formate route): step 1/1. Its function is as follows. Involved in the de novo purine biosynthesis. Catalyzes the transfer of formate to 5-phospho-ribosyl-glycinamide (GAR), producing 5-phospho-ribosyl-N-formylglycinamide (FGAR). Formate is provided by PurU via hydrolysis of 10-formyl-tetrahydrofolate. The sequence is that of Formate-dependent phosphoribosylglycinamide formyltransferase from Cupriavidus metallidurans (strain ATCC 43123 / DSM 2839 / NBRC 102507 / CH34) (Ralstonia metallidurans).